The sequence spans 46 residues: Endochitinase 1A (46 aa).

The protein belongs to the glycosyl hydrolase 19 family. Chitinase class I subfamily.

It catalyses the reaction Random endo-hydrolysis of N-acetyl-beta-D-glucosaminide (1-&gt;4)-beta-linkages in chitin and chitodextrins.. In terms of biological role, defense against chitin-containing fungal and bacterial pathogens. The sequence is that of Endochitinase 1A from Arachis hypogaea (Peanut).